The following is an 873-amino-acid chain: Bifunctional heparan sulfate N-deacetylase/N-sulfotransferase 3 (873 aa).

At Met-1–Arg-13 the chain is on the cytoplasmic side. The chain crosses the membrane as a helical; Signal-anchor for type II membrane protein span at residues Thr-14 to Tyr-34. Over Ser-35 to Arg-873 the chain is Lumenal. The interval Gly-36–Glu-589 is heparan sulfate N-deacetylase 3. N-linked (GlcNAc...) asparagine glycans are attached at residues Asn-146, Asn-226, Asn-342, and Asn-392. The heparan sulfate N-sulfotransferase 3 stretch occupies residues Lys-590 to Arg-873. Lys-605 acts as the For sulfotransferase activity in catalysis. Lys-605–Thr-609 lines the 3'-phosphoadenylyl sulfate pocket. N-linked (GlcNAc...) asparagine glycosylation is present at Asn-658. Ser-703 lines the 3'-phosphoadenylyl sulfate pocket. Asn-794 is a glycosylation site (N-linked (GlcNAc...) asparagine). A disulfide bridge links Cys-809 with Cys-819. Residue Lys-824–Tyr-828 coordinates 3'-phosphoadenylyl sulfate.

This sequence belongs to the sulfotransferase 1 family. NDST subfamily. In terms of assembly, monomer. Strongly expressed strongly in brain. Expressed at high level at embryonic day 11 compared to other stages of development. Weakly expressed in adult heart, kidney, muscle, endothelial cells and testis but not in other tissues.

The protein localises to the golgi apparatus membrane. The enzyme catalyses alpha-D-glucosaminyl-[heparan sulfate](n) + 3'-phosphoadenylyl sulfate = N-sulfo-alpha-D-glucosaminyl-[heparan sulfate](n) + adenosine 3',5'-bisphosphate + 2 H(+). Its pathway is glycan metabolism; heparan sulfate biosynthesis. The protein operates within glycan metabolism; heparin biosynthesis. Essential bifunctional enzyme that catalyzes both the N-deacetylation and the N-sulfation of glucosamine (GlcNAc) of the glycosaminoglycan in heparan sulfate. Modifies the GlcNAc-GlcA disaccharide repeating sugar backbone to make N-sulfated heparosan, a prerequisite substrate for later modifications in heparin biosynthesis. Has high deacetylase activity but low sulfotransferase activity. The polypeptide is Bifunctional heparan sulfate N-deacetylase/N-sulfotransferase 3 (Ndst3) (Mus musculus (Mouse)).